The following is a 198-amino-acid chain: Nucleoid occlusion factor SlmA (198 aa).

In terms of domain architecture, HTH tetR-type spans 10–70 (NRREEILQSL…SLIEFIEDSL (61 aa)). Positions 33–52 (TTAKLAASVGVSEAALYRHF) form a DNA-binding region, H-T-H motif. Residues 117-144 (EQDRLQGRINQLFERIEAQLRQVLREKR) are a coiled coil.

The protein belongs to the nucleoid occlusion factor SlmA family. In terms of assembly, homodimer. Interacts with FtsZ.

It is found in the cytoplasm. The protein localises to the nucleoid. In terms of biological role, required for nucleoid occlusion (NO) phenomenon, which prevents Z-ring formation and cell division over the nucleoid. Acts as a DNA-associated cell division inhibitor that binds simultaneously chromosomal DNA and FtsZ, and disrupts the assembly of FtsZ polymers. SlmA-DNA-binding sequences (SBS) are dispersed on non-Ter regions of the chromosome, preventing FtsZ polymerization at these regions. This Salmonella dublin (strain CT_02021853) protein is Nucleoid occlusion factor SlmA.